The chain runs to 344 residues: Flavonoid 7-O-methyltransferase 1A (344 aa).

Position 211 (D211) interacts with S-adenosyl-L-methionine. The Proton acceptor role is filled by H249.

The protein belongs to the class I-like SAM-binding methyltransferase superfamily. Cation-independent O-methyltransferase family. As to quaternary structure, homodimer.

The enzyme catalyses apigenin + S-adenosyl-L-methionine = genkwanin + S-adenosyl-L-homocysteine + H(+). The catalysed reaction is luteolin + S-adenosyl-L-methionine = luteolin 7-methyl ether + S-adenosyl-L-homocysteine + H(+). It carries out the reaction quercetin + S-adenosyl-L-methionine = rhamnetin + S-adenosyl-L-homocysteine + H(+). It catalyses the reaction (2S)-naringenin + S-adenosyl-L-methionine = (2S)-sakuranetin + S-adenosyl-L-homocysteine + H(+). The enzyme catalyses kaempferol + S-adenosyl-L-methionine = kaempferol 7-methyl ether + S-adenosyl-L-homocysteine + H(+). The catalysed reaction is isorhamnetin + S-adenosyl-L-methionine = rhamnacene + S-adenosyl-L-homocysteine + H(+). It carries out the reaction 4',7,8-trihydroxyflavone + S-adenosyl-L-methionine = 4',8-dihydroxy-7-methoxyflavone + S-adenosyl-L-homocysteine. It catalyses the reaction scutellarein + S-adenosyl-L-methionine = scutellarein 7-methyl ether + S-adenosyl-L-homocysteine. The protein operates within flavonoid metabolism. Functionally, flavonoid 7-O-methyltransferase involved in the biosynthesis of polymethoxylated flavonoids natural products such as pebrellin, aroma compounds which contribute to the flavor of peppermint, and exhibit pharmacological activities such as anti-allergic, anti-oxidant, antibacterial, anti-proliferative, and anti-inflammatory effects. Catalyzes S-adenosylmethionine-dependent regioselective 7-O-methylation of flavonoids; active on various hydroxylated flavonoid substrates, including luteolin (LUT), quercetin, kaempferol, isorhamnetin, apigenin (API), scutellarein (6-hydroxy-apigenin, 6-OH-API, SCU), 7,8,4'-trihydroxy-flavone and naringenin (NAR), and, with a lower efficiency, 7,8,3',4'-tetrahydroxy-flavone, taxifolin, hesperetin and genistein. The chain is Flavonoid 7-O-methyltransferase 1A from Mentha piperita (Peppermint).